A 234-amino-acid chain; its full sequence is Zinc finger FYVE domain-containing protein 21 (234 aa).

The segment at 44 to 104 adopts an FYVE-type zinc-finger fold; the sequence is DKECPRCMQC…QCADCALVSH (61 aa). Residues Cys-50, Cys-53, Cys-66, Cys-69, Cys-74, Cys-77, Cys-96, and Cys-99 each coordinate Zn(2+). Residues 107-234 are PH-like; that stretch reads AEFYDKQLKV…TKLLYESRDQ (128 aa).

Interacts with PTK2/FAK1. Widely expressed.

Its subcellular location is the cell junction. It is found in the focal adhesion. The protein resides in the cytoplasmic vesicle. The protein localises to the endosome. Functionally, plays a role in cell adhesion, and thereby in cell motility which requires repeated formation and disassembly of focal adhesions. Regulates microtubule-induced PTK2/FAK1 dephosphorylation, an event important for focal adhesion disassembly, as well as integrin beta-1/ITGB1 cell surface expression. The polypeptide is Zinc finger FYVE domain-containing protein 21 (Zfyve21) (Mus musculus (Mouse)).